Consider the following 341-residue polypeptide: MASSRTLGTFRLPPLPTIREIIKLFRLQAVKQLSQNFLLDLRLTDKIVRKAGNLTNAYVYEVGPGPGGITRSILNAGVAELLVVEKDSRFIPGLQMLSDAAPGKLRIVHGDVLTFKIERAFPESLKRQWEDDPPNVHIIGNLPFSVSTPLIIKWLENVSQRNGPFAYGRTRMMLTFQKEVAERLTATTGSKQRSRLSIMAQYLCDVQHILTIPGQAFVPKPEVDSGVVHFTPLTRPRIKQPFKLVEKVVQNAFQFRRKYCHRGLGMLFPEARRLESTGKLLELADVDPTLRPTQLTVSHFKSLCDVYRKMCDEDPHLFAYNFREELRQKSKKEDDKQSCRL.

A mitochondrion-targeting transit peptide spans 1-27 (MASSRTLGTFRLPPLPTIREIIKLFRL). S-adenosyl-L-methionine-binding residues include L38, G63, E85, K86, D111, V112, and N141.

The protein belongs to the class I-like SAM-binding methyltransferase superfamily. rRNA adenine N(6)-methyltransferase family. KsgA subfamily. In terms of assembly, interacts with mitochondrial RNA polymerase POLRMT. Interacts with TFAM. Bound to the maturing mtSSU until the late stages of assembly.

Its subcellular location is the mitochondrion. The enzyme catalyses adenosine(N)/adenosine(N+1) in rRNA + 4 S-adenosyl-L-methionine = N(6)-dimethyladenosine(N)/N(6)-dimethyladenosine(N+1) in rRNA + 4 S-adenosyl-L-homocysteine + 4 H(+). Mitochondrial methyltransferase which uses S-adenosyl methionine to dimethylate two highly conserved adjacent adenosine residues (A1583 and A1584) within the loop of helix 45 at the 3-prime end of 12S rRNA, thereby regulating the assembly or stability of the small subunit of the mitochondrial ribosome. Also required for basal transcription of mitochondrial DNA, probably via its interaction with POLRMT and TFAM. Stimulates transcription independently of the methyltransferase activity. This chain is Mitochondrial dimethyladenosine transferase 1 (TFB1M), found in Bos taurus (Bovine).